Here is a 483-residue protein sequence, read N- to C-terminus: MGLFDFSVKELHDKLVKKEITPFDLVTESFNRIESVEDKVGSFITLNKEAAFDVAEELGDAGIDPNNMLAGLPIGIKDNIVTKNLRTTAASKILENFDPIYDATVVSKLKNAQTINIGKLNMDEFAMGSSTETSYFHKTHNPWDLSRVPGGSSGGSASAVAAGEVLFSLGSDTGGSIRQPAAFCGVVGMKPTYGRVSRFGLIAFASSLDQIGPITKNVEDNAYLLEAISGLDANDSTSINQPVERFSDNLTGDIKGLRIGVPKEYLGEGVDPGVKQAVLDALKTLEKLGATWDEVSLPHSEYGVASYYILASSEASSNLSRFDGVRYGYRSPNAHTLEELYKKTRSEGFGDEVKRRIMLGTYALSSGYYDAYYKKAQQARTLIKQDFVNVFEKYDVIIGPSSPTTAFKIDGMINDPITMYSNDILTVPINLAGVPAISVPCGFSEGLPVGLQIIGNYFEESLLYKVAHAFEQETTFHKEKPNL.

Active-site charge relay system residues include K77 and S152. S176 serves as the catalytic Acyl-ester intermediate.

The protein belongs to the amidase family. GatA subfamily. As to quaternary structure, heterotrimer of A, B and C subunits.

It carries out the reaction L-glutamyl-tRNA(Gln) + L-glutamine + ATP + H2O = L-glutaminyl-tRNA(Gln) + L-glutamate + ADP + phosphate + H(+). Allows the formation of correctly charged Gln-tRNA(Gln) through the transamidation of misacylated Glu-tRNA(Gln) in organisms which lack glutaminyl-tRNA synthetase. The reaction takes place in the presence of glutamine and ATP through an activated gamma-phospho-Glu-tRNA(Gln). This is Glutamyl-tRNA(Gln) amidotransferase subunit A from Listeria welshimeri serovar 6b (strain ATCC 35897 / DSM 20650 / CCUG 15529 / CIP 8149 / NCTC 11857 / SLCC 5334 / V8).